Here is a 185-residue protein sequence, read N- to C-terminus: Ribosome-recycling factor (185 aa).

Residues 138 to 160 (AMDKAVKDGEVGEDEGARGEKEL) form a disordered region.

Belongs to the RRF family.

It localises to the cytoplasm. In terms of biological role, responsible for the release of ribosomes from messenger RNA at the termination of protein biosynthesis. May increase the efficiency of translation by recycling ribosomes from one round of translation to another. The chain is Ribosome-recycling factor from Micrococcus luteus (strain ATCC 4698 / DSM 20030 / JCM 1464 / CCM 169 / CCUG 5858 / IAM 1056 / NBRC 3333 / NCIMB 9278 / NCTC 2665 / VKM Ac-2230) (Micrococcus lysodeikticus).